We begin with the raw amino-acid sequence, 351 residues long: Signal recognition particle receptor FtsY (351 aa).

Residues 156 to 163, 238 to 242, and 302 to 305 contribute to the GTP site; these read GINGTGKT, DTAGR, and TKLD.

The protein belongs to the GTP-binding SRP family. FtsY subfamily. Part of the signal recognition particle protein translocation system, which is composed of SRP and FtsY. SRP is a ribonucleoprotein composed of Ffh and a 4.5S RNA molecule.

Its subcellular location is the cell membrane. It localises to the cytoplasm. The catalysed reaction is GTP + H2O = GDP + phosphate + H(+). Functionally, involved in targeting and insertion of nascent membrane proteins into the cytoplasmic membrane. Acts as a receptor for the complex formed by the signal recognition particle (SRP) and the ribosome-nascent chain (RNC). Interaction with SRP-RNC leads to the transfer of the RNC complex to the Sec translocase for insertion into the membrane, the hydrolysis of GTP by both Ffh and FtsY, and the dissociation of the SRP-FtsY complex into the individual components. The polypeptide is Signal recognition particle receptor FtsY (Buchnera aphidicola subsp. Schizaphis graminum (strain Sg)).